We begin with the raw amino-acid sequence, 475 residues long: MKVTLPDFERAGVMVVGDVMLDRYWYGPTSRISPEAPVPVVKVETIEERPGGAANVAMNIASLGASSRLVGLTGIDDAARALSQSLAQVNVKCDFVSVPTHPTITKLRVLSRNQQLIRLDFEEGFDGVDPEPLHERINQALGQIGALVLSDYAKGALASVQQMIQLARKAGVPVLIDPKGTDFERYRGATLLTPNLSEFEAVAGKCKTEQDIVERGMKIIADFDLSALLVTRSEQGMTLLQPGKAPFHLPTQAQEVYDVTGAGDTVIGVLAATLASGNSLEEACFFANAAAGVVVGKLGTSTVSPVELENAVRGRAETGFGVMSEAALKEAVLAARKRGEKVVMTNGVFDILHAGHVSYLANARKLGDRLIVAVNSDASTRRLKGDTRPVNPQEQRMIVLAALEAVDWVVPFEEDTPQRLISEILPDLLVKGGDYKPEDIAGSKEVWANGGDVMVLNFEDGCSTTNIIKKIQKNS.

A ribokinase region spans residues 1-318 (MKVTLPDFER…ENAVRGRAET (318 aa)). 195-198 (NLSE) is a binding site for ATP. Aspartate 264 is a catalytic residue. The tract at residues 344–475 (MTNGVFDILH…NIIKKIQKNS (132 aa)) is cytidylyltransferase.

In the N-terminal section; belongs to the carbohydrate kinase PfkB family. This sequence in the C-terminal section; belongs to the cytidylyltransferase family. Homodimer.

It catalyses the reaction D-glycero-beta-D-manno-heptose 7-phosphate + ATP = D-glycero-beta-D-manno-heptose 1,7-bisphosphate + ADP + H(+). It carries out the reaction D-glycero-beta-D-manno-heptose 1-phosphate + ATP + H(+) = ADP-D-glycero-beta-D-manno-heptose + diphosphate. It functions in the pathway nucleotide-sugar biosynthesis; ADP-L-glycero-beta-D-manno-heptose biosynthesis; ADP-L-glycero-beta-D-manno-heptose from D-glycero-beta-D-manno-heptose 7-phosphate: step 1/4. Its pathway is nucleotide-sugar biosynthesis; ADP-L-glycero-beta-D-manno-heptose biosynthesis; ADP-L-glycero-beta-D-manno-heptose from D-glycero-beta-D-manno-heptose 7-phosphate: step 3/4. In terms of biological role, catalyzes the phosphorylation of D-glycero-D-manno-heptose 7-phosphate at the C-1 position to selectively form D-glycero-beta-D-manno-heptose-1,7-bisphosphate. Its function is as follows. Catalyzes the ADP transfer from ATP to D-glycero-beta-D-manno-heptose 1-phosphate, yielding ADP-D-glycero-beta-D-manno-heptose. The protein is Bifunctional protein HldE of Cronobacter sakazakii (strain ATCC BAA-894) (Enterobacter sakazakii).